Reading from the N-terminus, the 546-residue chain is ASTQSPSVFPLTRCCKNIPSNATSVTLGCLATGYFPEPVMVTWDTGSLNGTTMTLPATTLTLSGHYATISLLTVSGAWAKQMFTCRVAHTPSSTDWVDNKTFSVCSRDFTPPTVKILQSSCDGGGHFPPTIQLLCLVSGYTPGTINITWLEDGQVMDVDLSTASTTQEGELASTQSELTLSQKHWLSDRTYTCQVTYQGHTFEDSTKKCADSNPRGVSAYLSRPSPFDLFIRKSPTITCLVVDLAPSKGTVNLTWSRASGKPVNHSTRKEEKQRNGTLTVTSTLPVGTRDWIEGETYQCRVTHPHLPRALMRSTTKTSGPRAAPEVYAFATPEWPGSRDKRTLACLIQNFMPEDISVQWLHNEVQLPDARHSTTQPRKTKGSGFFVFSRLEVTRAEWEQKDEFICRAVHEAASPSQTVQRAVSVNPGLAGGSAQSQRAPDRVLCHSGQQQGLPRAAGGSVPHPRCHCGAGRADWPGPPELDVCVEEAEGEAPWTWTGLCIFAALFLLSVSYSAAITLLMVQRFLSATRQGRPQTSLDYTNVLQPHA.

The Extracellular segment spans residues 1-499; that stretch reads ASTQSPSVFP…EAPWTWTGLC (499 aa). Ig-like domains lie at 6–103, 112–210, 214–318, and 324–423; these read PSVF…KTFS, PTVK…KKCA, PRGV…TKTS, and PEVY…RAVS. 5 cysteine pairs are disulfide-bonded: C15–C105, C29–C85, C135–C193, C239–C299, and C345–C405. N21, N49, N99, N146, N252, N264, and N275 each carry an N-linked (GlcNAc...) asparagine glycan. Residues 500-520 traverse the membrane as a helical segment; sequence IFAALFLLSVSYSAAITLLMV. Over 521–546 the chain is Cytoplasmic; sequence QRFLSATRQGRPQTSLDYTNVLQPHA.

As to quaternary structure, the basic structural unit of both sIgE and mIgE molecules consists of two identical heavy chains and two identical light chains; disulfide-linked. N-terminal variable regions of the heavy and light chains form the antigen binding sites, whereas the C-terminal constant regions of the heavy chains interact with immune receptors to mediate effector functions. In terms of assembly, part of IgE antibody. Interacts (via CH3) with the alpha chain/FCE1RA of IgE Fc receptor complex. Interacts (via CH3 region) with FCER2 (via C-type lectin domain); this interaction regulates IgE homeostasis. Part of IgE B cell antigen receptor complex (BCR). The BCR complex consists of one mIgE molecule responsible for antigen binding, non-covalently associated with CD79A and CD79B signaling chains. Expressed in B lymphocytes stimulated with IL4 and CD40.

The protein localises to the secreted. It is found in the cell membrane. Its function is as follows. Constant region of immunoglobulin heavy chains. Immunoglobulins, also known as antibodies, are membrane-bound or secreted glycoproteins produced by B lymphocytes. In the recognition phase of humoral immunity, the membrane-bound immunoglobulins serve as receptors which, upon binding of a specific antigen, trigger the clonal expansion and differentiation of B lymphocytes into immunoglobulins-secreting plasma cells. Secreted immunoglobulins mediate the effector phase of humoral immunity, which results in the elimination of bound antigens. The antigen binding site is formed by the variable domain of one heavy chain, together with that of its associated light chain. Thus, each immunoglobulin has two antigen binding sites with remarkable affinity for a particular antigen. The variable domains are assembled by a process called V-(D)-J rearrangement and can then be subjected to somatic hypermutations which, after exposure to antigen and selection, allow affinity maturation for a particular antigen. In terms of biological role, constant region of secreted IgE, also known as the Fc region of IgE antibody. Mediates IgE effector functions on myeloid and lymphoid cells primarily via two Fc receptors, the high-affinity IgE Fc receptor complex/FCER1A:MS4A2:FCGR1A and the low-affinity FCER2 receptor, which upon antigen/allergen cross-linking initiate signaling pathways that lead to immune cell activation and differentiation. Triggers the immediate hypersensitivity response to allergens as a host defense mechanism against helminth parasites, pathogenic bacteria and venom toxicity. When dysregulated, it can elicit harmful life-threatening allergic and anaphylactic reactions. Stimulates the high-affinity IgE Fc receptor complex/FCER1A:MS4A2:FCGR1A on mast cells, basophils and eosinophils leading to secretion of vasoactive amines, lipid mediators and cytokines that contribute to inflammatory response, tissue remodeling and cytotoxicity against microbes. On macrophages, cross-linking of FCER2 by IgE immune complexes induces intracellular killing of parasites through activation of L-Arginine-nitric oxide pathway. Activates macrophages to kill tumor cells via antigen-specific antibody-dependent cytotoxicity (ADCC). Triggers differentiation of quiescent M0 macrophages toward M1 state and reprograms M2 macrophages toward a proinflammatory state with antitumor functions. Stimulates FCER2 on B cells and initiates IgE-dependent antigen uptake and presentation to T cells. Constant region of membrane-bound IgE (long mIgE), part of the B cell receptor complex (BCR). Upon antigen cross-linking triggers quick BCR signaling, ensuring survival of IgE-switched B cells and differentiation into plasma cells, thus regulating both primary and memory IgE responses. Functionally, constant region of membrane-bound IgE (short mIgE), part of the B cell receptor complex (BCR). Upon antigen cross-linking initiates slower but sustained BCR signaling that negatively regulates mature B cell proliferation. The polypeptide is Immunoglobulin heavy constant epsilon (Homo sapiens (Human)).